The following is a 305-amino-acid chain: MKKIIFMGTPSYATCILKALVENENFKLVALFTQPDKAVGRKQILTPSDTKAFLSQNYPSIPIFTPSSLKDENIMRQIKDLNPDFIVVAAYGKILPKAILDLAPCVNLHASLLPKYRGASPIQSAILNKDEKSGVCTMLMEEGLDTGAILESLECDIKDKNSSEVFELLANLAAKLILSTLLNFDKITPKKQEESLATLCRKIKKEDGLINLQNARELYQKYLAFTPWPGVFLENGLKFLELELVDELKQNAKMGEILELEKESFLLACKQGVLRIKKLQESGKKALDGRTYLNGKRLKSEDSLC.

111-114 (SLLP) lines the (6S)-5,6,7,8-tetrahydrofolate pocket.

It belongs to the Fmt family.

The catalysed reaction is L-methionyl-tRNA(fMet) + (6R)-10-formyltetrahydrofolate = N-formyl-L-methionyl-tRNA(fMet) + (6S)-5,6,7,8-tetrahydrofolate + H(+). Its function is as follows. Attaches a formyl group to the free amino group of methionyl-tRNA(fMet). The formyl group appears to play a dual role in the initiator identity of N-formylmethionyl-tRNA by promoting its recognition by IF2 and preventing the misappropriation of this tRNA by the elongation apparatus. This Campylobacter jejuni subsp. doylei (strain ATCC BAA-1458 / RM4099 / 269.97) protein is Methionyl-tRNA formyltransferase.